The following is a 115-amino-acid chain: Transmembrane protein 218 (115 aa).

Transmembrane regions (helical) follow at residues 5-25 (VLGVGAGVFLLALIWVLVLLL), 38-58 (FSIVFVFLGALIITTVLLLFP), and 81-101 (YVLLAFLSAVFLGGLFLLLTH).

Belongs to the TMEM218 family. As to quaternary structure, interacts with TMEM67.

Its subcellular location is the membrane. It is found in the cell projection. It localises to the cilium. In terms of biological role, may be involved in ciliary biogenesis or function. The chain is Transmembrane protein 218 (Tmem218) from Mus musculus (Mouse).